A 449-amino-acid chain; its full sequence is Cysteine--tRNA ligase (449 aa).

Cys29 serves as a coordination point for Zn(2+). A 'HIGH' region motif is present at residues 31 to 41 (PTVYDHLHIGN). Cys211, His236, and Glu240 together coordinate Zn(2+). Positions 269-273 (KMSKS) match the 'KMSKS' region motif. Lys272 provides a ligand contact to ATP.

The protein belongs to the class-I aminoacyl-tRNA synthetase family. As to quaternary structure, monomer. Zn(2+) is required as a cofactor.

It is found in the cytoplasm. It catalyses the reaction tRNA(Cys) + L-cysteine + ATP = L-cysteinyl-tRNA(Cys) + AMP + diphosphate. The sequence is that of Cysteine--tRNA ligase from Methylocella silvestris (strain DSM 15510 / CIP 108128 / LMG 27833 / NCIMB 13906 / BL2).